Here is a 245-residue protein sequence, read N- to C-terminus: IVYGTVTTPGKYPWMVSIHERVKDVMKQACGGAILNENWIVTAAHCFDQPIILKDYEVYVGIVSWLHKNAPTVQKFQLSKIIIHDKYVKDGFANDIALIKTATPIDIKGSKYGVNGICFPSGATDPSGEATVIGWGMIRGGGPISAELRQVTLPLVPWQKCKQIYGHPDSEFEYIQVVPSMLCAGGNGKDACQFDSGGPLFQYDKKGVATLIGTVANGADCAYAHYPGMYMKVSAFRSWMDKVMT.

The 245-residue stretch at 1-245 (IVYGTVTTPG…FRSWMDKVMT (245 aa)) folds into the Peptidase S1 domain. An intrachain disulfide couples Cys-30 to Cys-46. Active-site charge relay system residues include His-45 and Asp-95. Disulfide bonds link Cys-161–Cys-183 and Cys-192–Cys-221. The active-site Charge relay system is the Ser-196.

As to expression, expressed by the venom gland.

It is found in the secreted. Functionally, protease. Hydrolyzes gelatin and succinyl casein. In Phoneutria nigriventer (Brazilian armed spider), this protein is U21-ctenitoxin-Pn1a.